The sequence spans 341 residues: UDP-3-O-(3-hydroxymyristoyl)glucosamine N-acyltransferase (341 aa).

H239 acts as the Proton acceptor in catalysis.

Belongs to the transferase hexapeptide repeat family. LpxD subfamily. Homotrimer.

The catalysed reaction is a UDP-3-O-[(3R)-3-hydroxyacyl]-alpha-D-glucosamine + a (3R)-hydroxyacyl-[ACP] = a UDP-2-N,3-O-bis[(3R)-3-hydroxyacyl]-alpha-D-glucosamine + holo-[ACP] + H(+). The enzyme catalyses UDP-3-O-[(3R)-3-hydroxytetradecanoyl]-alpha-D-glucosamine + (3R)-hydroxytetradecanoyl-[ACP] = UDP-2-N,3-O-bis[(3R)-3-hydroxytetradecanoyl]-alpha-D-glucosamine + holo-[ACP] + H(+). The protein operates within glycolipid biosynthesis; lipid IV(A) biosynthesis; lipid IV(A) from (3R)-3-hydroxytetradecanoyl-[acyl-carrier-protein] and UDP-N-acetyl-alpha-D-glucosamine: step 3/6. Its function is as follows. Catalyzes the N-acylation of UDP-3-O-(hydroxytetradecanoyl)glucosamine using 3-hydroxytetradecanoyl-ACP as the acyl donor. Is involved in the biosynthesis of lipid A, a phosphorylated glycolipid that anchors the lipopolysaccharide to the outer membrane of the cell. The polypeptide is UDP-3-O-(3-hydroxymyristoyl)glucosamine N-acyltransferase (Salmonella paratyphi A (strain ATCC 9150 / SARB42)).